Reading from the N-terminus, the 277-residue chain is Large ribosomal subunit protein uL2 (277 aa).

The interval glycine 222 to lysine 277 is disordered.

This sequence belongs to the universal ribosomal protein uL2 family. As to quaternary structure, part of the 50S ribosomal subunit. Forms a bridge to the 30S subunit in the 70S ribosome.

In terms of biological role, one of the primary rRNA binding proteins. Required for association of the 30S and 50S subunits to form the 70S ribosome, for tRNA binding and peptide bond formation. It has been suggested to have peptidyltransferase activity; this is somewhat controversial. Makes several contacts with the 16S rRNA in the 70S ribosome. This chain is Large ribosomal subunit protein uL2, found in Bartonella henselae (strain ATCC 49882 / DSM 28221 / CCUG 30454 / Houston 1) (Rochalimaea henselae).